Here is a 37-residue protein sequence, read N- to C-terminus: Large ribosomal subunit protein bL36 (37 aa).

This sequence belongs to the bacterial ribosomal protein bL36 family.

In Chromobacterium violaceum (strain ATCC 12472 / DSM 30191 / JCM 1249 / CCUG 213 / NBRC 12614 / NCIMB 9131 / NCTC 9757 / MK), this protein is Large ribosomal subunit protein bL36.